The primary structure comprises 32 residues: Photosystem II reaction center protein T (32 aa).

The chain crosses the membrane as a helical span at residues 3-23; the sequence is ALVYTFLLIGTLMVIFFAVFF.

The protein belongs to the PsbT family. As to quaternary structure, PSII is composed of 1 copy each of membrane proteins PsbA, PsbB, PsbC, PsbD, PsbE, PsbF, PsbH, PsbI, PsbJ, PsbK, PsbL, PsbM, PsbT, PsbX, PsbY, PsbZ, Psb30/Ycf12, at least 3 peripheral proteins of the oxygen-evolving complex and a large number of cofactors. It forms dimeric complexes.

The protein resides in the plastid. It is found in the chloroplast thylakoid membrane. Functionally, found at the monomer-monomer interface of the photosystem II (PS II) dimer, plays a role in assembly and dimerization of PSII. PSII is a light-driven water plastoquinone oxidoreductase, using light energy to abstract electrons from H(2)O, generating a proton gradient subsequently used for ATP formation. This is Photosystem II reaction center protein T from Trieres chinensis (Marine centric diatom).